Reading from the N-terminus, the 239-residue chain is Large ribosomal subunit protein eL32 (239 aa).

2 stretches are compositionally biased toward acidic residues: residues Met-1 to Ala-12 and Val-67 to Glu-91. 2 disordered regions span residues Met-1 to Glu-23 and Gly-64 to Gly-178. Residues Thr-92 to Leu-113 show a composition bias toward basic and acidic residues. Basic residues predominate over residues Tyr-130–Lys-155.

The protein belongs to the eukaryotic ribosomal protein eL32 family.

In Halobacterium salinarum (strain ATCC 700922 / JCM 11081 / NRC-1) (Halobacterium halobium), this protein is Large ribosomal subunit protein eL32 (rpl32e).